The chain runs to 295 residues: UDP-3-O-acyl-N-acetylglucosamine deacetylase (295 aa).

Zn(2+) is bound by residues His75, His232, and Asp236. His259 acts as the Proton donor in catalysis.

This sequence belongs to the LpxC family. Zn(2+) is required as a cofactor.

The enzyme catalyses a UDP-3-O-[(3R)-3-hydroxyacyl]-N-acetyl-alpha-D-glucosamine + H2O = a UDP-3-O-[(3R)-3-hydroxyacyl]-alpha-D-glucosamine + acetate. It functions in the pathway glycolipid biosynthesis; lipid IV(A) biosynthesis; lipid IV(A) from (3R)-3-hydroxytetradecanoyl-[acyl-carrier-protein] and UDP-N-acetyl-alpha-D-glucosamine: step 2/6. Functionally, catalyzes the hydrolysis of UDP-3-O-myristoyl-N-acetylglucosamine to form UDP-3-O-myristoylglucosamine and acetate, the committed step in lipid A biosynthesis. This chain is UDP-3-O-acyl-N-acetylglucosamine deacetylase, found in Helicobacter pylori (strain J99 / ATCC 700824) (Campylobacter pylori J99).